The sequence spans 352 residues: Thiosulfate transporter TsuA (352 aa).

A helical membrane pass occupies residues 1-21 (MFSMILSGLICGALLGFVMQR). Residues 22–44 (GRFCLTGGFRDMYIVKNNRMFYA) are Cytoplasmic-facing. Residues 45–65 (LLIAISVQSVGVFALIQAGLL) form a helical membrane-spanning segment. The Periplasmic segment spans residues 66–70 (TYEAG). The chain crosses the membrane as a helical span at residues 71-91 (AFPWLGTVIGGYIFGLGIVLA). The Cytoplasmic segment spans residues 92-102 (GGCATGTWYRA). The chain crosses the membrane as a helical span at residues 103-123 (GEGLIGSWIALFTYMVMSAVM). Residues 124 to 148 (RSPHASGLNQTLQHYSTEHNSIAET) lie on the Periplasmic side of the membrane. Residues 149 to 169 (FNLSVWPLVAVLLVITLWVVM) form a helical membrane-spanning segment. The Cytoplasmic segment spans residues 170–197 (KELKKPKLKVATLPPRRTGIAHILFEKR). The helical transmembrane segment at 198-218 (WHPFVTAVLIGLIALLAWPLS) threads the bilayer. The Periplasmic segment spans residues 219–247 (EATGRMFGLGITSPTANILQFLVAGDMKY). A helical membrane pass occupies residues 248-268 (INWGVFLVLGIFVGSFIAAKA). Residues 269–289 (SREFRVRAADAQTTLRSGLGG) lie on the Cytoplasmic side of the membrane. The helical transmembrane segment at 290 to 310 (VLMGFGASIAGGCSIGNGLVM) threads the bilayer. Over 311–317 (TAMMTWQ) the chain is Periplasmic. The helical transmembrane segment at 318–338 (GWIGLVFMILGVWTASWLVYV) threads the bilayer. Over 339–352 (RPQRKARLATAAAN) the chain is Cytoplasmic.

The protein belongs to the TsuA/YedE (TC 9.B.102) family.

It localises to the cell inner membrane. It catalyses the reaction thiosulfate(in) = thiosulfate(out). Mediates thiosulfate uptake. The chain is Thiosulfate transporter TsuA from Escherichia coli (strain K12).